The chain runs to 732 residues: Polyribonucleotide nucleotidyltransferase (732 aa).

The Mg(2+) site is built by Asp-516 and Asp-522. The KH domain maps to 582 to 642 (PSSHTITVHP…PKVIAACDYI (61 aa)). The region spanning 659-726 (GDILKGKIKR…KGHKIELGLR (68 aa)) is the S1 motif domain.

The protein belongs to the polyribonucleotide nucleotidyltransferase family. It depends on Mg(2+) as a cofactor.

It localises to the cytoplasm. The enzyme catalyses RNA(n+1) + phosphate = RNA(n) + a ribonucleoside 5'-diphosphate. Functionally, involved in mRNA degradation. Catalyzes the phosphorolysis of single-stranded polyribonucleotides processively in the 3'- to 5'-direction. In Nitratiruptor sp. (strain SB155-2), this protein is Polyribonucleotide nucleotidyltransferase.